The chain runs to 471 residues: Alpha-galactosidase 1 (471 aa).

A signal peptide spans 1-18; it reads MFAFYFLTACISLKGVFG. A disulfide bridge connects residues C42 and C74. 2 residues coordinate substrate: D72 and D73. A glycan (N-linked (GlcNAc...) asparagine) is linked at N105. A disulfide bridge connects residues C121 and C151. K147 is a binding site for substrate. The Nucleophile role is filled by D149. The N-linked (GlcNAc...) asparagine glycan is linked to N175. Substrate is bound at residue R205. D209 acts as the Proton donor in catalysis. Cystine bridges form between C221–C237 and C223–C230. Q251 contacts substrate. N-linked (GlcNAc...) asparagine glycans are attached at residues N270, N370, N403, N413, N422, N435, and N454.

The protein belongs to the glycosyl hydrolase 27 family. As to quaternary structure, homotetramer.

The protein resides in the secreted. It catalyses the reaction Hydrolysis of terminal, non-reducing alpha-D-galactose residues in alpha-D-galactosides, including galactose oligosaccharides, galactomannans and galactolipids.. The protein is Alpha-galactosidase 1 (MEL1) of Saccharomyces cerevisiae (Baker's yeast).